The chain runs to 278 residues: Mediator of RNA polymerase II transcription subunit 4 (278 aa).

The stretch at 57–88 forms a coiled coil; it reads HARILTLRAQVEALEEQKKSSVTALATLRHEL. Disordered regions lie at residues 120–181 and 240–278; these read VPPT…EEEE and VEAP…DLDD. Basic and acidic residues-rich tracts occupy residues 124–142 and 160–172; these read YRER…KDDA and DAPK…DNKP. The segment covering 250–268 has biased composition (low complexity); that stretch reads AEPVQAQAPRPARPAQPQA.

It belongs to the Mediator complex subunit 4 family. Component of the Mediator complex.

Its subcellular location is the nucleus. Functionally, component of the Mediator complex, a coactivator involved in the regulated transcription of nearly all RNA polymerase II-dependent genes. Mediator functions as a bridge to convey information from gene-specific regulatory proteins to the basal RNA polymerase II transcription machinery. Mediator is recruited to promoters by direct interactions with regulatory proteins and serves as a scaffold for the assembly of a functional preinitiation complex with RNA polymerase II and the general transcription factors. This is Mediator of RNA polymerase II transcription subunit 4 (MED4) from Phaeosphaeria nodorum (strain SN15 / ATCC MYA-4574 / FGSC 10173) (Glume blotch fungus).